The chain runs to 97 residues: Transcription and mRNA export factor SUS1 (97 aa).

Belongs to the ENY2 family. As to quaternary structure, component of the nuclear pore complex (NPC)-associated TREX-2 complex (transcription and export complex 2), composed of at least SUS1, SAC3, THP1, SEM1, and CDC31. TREX-2 contains 2 SUS1 chains. The TREX-2 complex interacts with the nucleoporin NUP1. Component of the 1.8 MDa SAGA transcription coactivator-HAT complex. SAGA is built of 5 distinct domains with specialized functions. Within the SAGA complex, SUS1, SGF11, SGF73 and UBP8 form an additional subcomplex of SAGA called the DUB module (deubiquitination module). Interacts directly with THP1, SAC3, SGF11, and with the RNA polymerase II.

The protein localises to the nucleus. It is found in the nucleoplasm. Its subcellular location is the cytoplasm. The protein resides in the P-body. In terms of biological role, involved in mRNA export coupled transcription activation by association with both the TREX-2 and the SAGA complexes. At the promoters, SAGA is required for recruitment of the basal transcription machinery. It influences RNA polymerase II transcriptional activity through different activities such as TBP interaction and promoter selectivity, interaction with transcription activators, and chromatin modification through histone acetylation and deubiquitination. Within the SAGA complex, participates in a subcomplex required for deubiquitination of H2B and for the maintenance of steady-state H3 methylation levels. The TREX-2 complex functions in docking export-competent ribonucleoprotein particles (mRNPs) to the nuclear entrance of the nuclear pore complex (nuclear basket). TREX-2 participates in mRNA export and accurate chromatin positioning in the nucleus by tethering genes to the nuclear periphery. May also be involved in cytoplasmic mRNA decay by interaction with components of P-bodies. The protein is Transcription and mRNA export factor SUS1 of Meyerozyma guilliermondii (strain ATCC 6260 / CBS 566 / DSM 6381 / JCM 1539 / NBRC 10279 / NRRL Y-324) (Yeast).